A 1405-amino-acid chain; its full sequence is DNA-directed RNA polymerase subunit beta' (1405 aa).

Zn(2+) is bound by residues Cys-70, Cys-72, Cys-85, and Cys-88. Mg(2+) contacts are provided by Asp-460, Asp-462, and Asp-464. Residues Cys-814, Cys-888, Cys-895, and Cys-898 each coordinate Zn(2+).

This sequence belongs to the RNA polymerase beta' chain family. The RNAP catalytic core consists of 2 alpha, 1 beta, 1 beta' and 1 omega subunit. When a sigma factor is associated with the core the holoenzyme is formed, which can initiate transcription. Requires Mg(2+) as cofactor. Zn(2+) serves as cofactor.

It catalyses the reaction RNA(n) + a ribonucleoside 5'-triphosphate = RNA(n+1) + diphosphate. DNA-dependent RNA polymerase catalyzes the transcription of DNA into RNA using the four ribonucleoside triphosphates as substrates. The sequence is that of DNA-directed RNA polymerase subunit beta' from Shewanella putrefaciens (strain CN-32 / ATCC BAA-453).